The primary structure comprises 357 residues: Holliday junction branch migration complex subunit RuvB (357 aa).

The span at 1-15 shows a compositional bias: low complexity; it reads MAIQSDSLSSLPDSP. Residues 1–30 form a disordered region; it reads MAIQSDSLSSLPDSPRIVAPQPVSPNEESI. The large ATPase domain (RuvB-L) stretch occupies residues 13–195; sequence DSPRIVAPQP…FGIVSRLEFY (183 aa). ATP contacts are provided by residues leucine 34, arginine 35, glycine 76, lysine 79, threonine 80, threonine 81, 142-144, arginine 185, tyrosine 195, and arginine 232; that span reads EDF. Threonine 80 lines the Mg(2+) pocket. The interval 196-266 is small ATPAse domain (RuvB-S); it reads NTDELARIVT…AAGRALAMLD (71 aa). Residues 269–357 form a head domain (RuvB-H) region; it reads PQGLDVMDRK…SGGTGELFSK (89 aa). Residues arginine 305, arginine 324, and arginine 329 each coordinate DNA.

The protein belongs to the RuvB family. As to quaternary structure, homohexamer. Forms an RuvA(8)-RuvB(12)-Holliday junction (HJ) complex. HJ DNA is sandwiched between 2 RuvA tetramers; dsDNA enters through RuvA and exits via RuvB. An RuvB hexamer assembles on each DNA strand where it exits the tetramer. Each RuvB hexamer is contacted by two RuvA subunits (via domain III) on 2 adjacent RuvB subunits; this complex drives branch migration. In the full resolvosome a probable DNA-RuvA(4)-RuvB(12)-RuvC(2) complex forms which resolves the HJ.

The protein localises to the cytoplasm. The catalysed reaction is ATP + H2O = ADP + phosphate + H(+). Functionally, the RuvA-RuvB-RuvC complex processes Holliday junction (HJ) DNA during genetic recombination and DNA repair, while the RuvA-RuvB complex plays an important role in the rescue of blocked DNA replication forks via replication fork reversal (RFR). RuvA specifically binds to HJ cruciform DNA, conferring on it an open structure. The RuvB hexamer acts as an ATP-dependent pump, pulling dsDNA into and through the RuvAB complex. RuvB forms 2 homohexamers on either side of HJ DNA bound by 1 or 2 RuvA tetramers; 4 subunits per hexamer contact DNA at a time. Coordinated motions by a converter formed by DNA-disengaged RuvB subunits stimulates ATP hydrolysis and nucleotide exchange. Immobilization of the converter enables RuvB to convert the ATP-contained energy into a lever motion, pulling 2 nucleotides of DNA out of the RuvA tetramer per ATP hydrolyzed, thus driving DNA branch migration. The RuvB motors rotate together with the DNA substrate, which together with the progressing nucleotide cycle form the mechanistic basis for DNA recombination by continuous HJ branch migration. Branch migration allows RuvC to scan DNA until it finds its consensus sequence, where it cleaves and resolves cruciform DNA. The chain is Holliday junction branch migration complex subunit RuvB from Bordetella pertussis (strain Tohama I / ATCC BAA-589 / NCTC 13251).